The following is an 812-amino-acid chain: Endogenous retrovirus group K member 18 Pol protein (812 aa).

Residues 57–245 (LEKGHIEPSF…TPFHYLGMQI (189 aa)) form the Reverse transcriptase domain. The LPQG motif lies at 161 to 164 (LPQG). The short motif at 195–198 (YFDD) is the YXDD element. Residues 460–590 (LENALTVFTD…ADLLVSSAFI (131 aa)) enclose the RNase H type-1 domain. Mg(2+)-binding residues include Asp469, Glu497, Asp517, and Asp582. The Integrase-type zinc finger occupies 587-628 (SAFIKAQELHALTHVNAAGLKNKFDVTWKQAKDIVQHCTQCQ). Residues His596, His600, Cys624, and Cys627 each coordinate Zn(2+). Residues 637–803 (AGVNPEVCVL…TSAEHLTGKK (167 aa)) enclose the Integrase catalytic domain.

The protein belongs to the beta type-B retroviral polymerase family. HERV class-II K(HML-2) pol subfamily.

The catalysed reaction is DNA(n) + a 2'-deoxyribonucleoside 5'-triphosphate = DNA(n+1) + diphosphate. It catalyses the reaction Endonucleolytic cleavage to 5'-phosphomonoester.. Early post-infection, the reverse transcriptase converts the viral RNA genome into double-stranded viral DNA. The RNase H domain of the reverse transcriptase performs two functions. It degrades the RNA template and specifically removes the RNA primer from the RNA/DNA hybrid. Following nuclear import, the integrase catalyzes the insertion of the linear, double-stranded viral DNA into the host cell chromosome. Endogenous Pol proteins may have kept, lost or modified their original function during evolution. The chain is Endogenous retrovirus group K member 18 Pol protein (ERVK-18) from Homo sapiens (Human).